The primary structure comprises 248 residues: Mannose-binding protein C (248 aa).

Residues 1–20 form the signal peptide; it reads MSPFLSLPLLLLSVLSASYS. Residues 36–112 form a disordered region; sequence IACSSPGING…GDSSLAASER (77 aa). Positions 42 to 99 constitute a Collagen-like domain; sequence GINGFPGKDGRDGTKGEKGEPGQGLRGLQGPPGKLGPPGNPGPSGSPGAKGQKGDPGA. At Pro-47 the chain carries 4-hydroxyproline. The segment covering 49-61 has biased composition (basic and acidic residues); the sequence is KDGRDGTKGEKGE. Pro-73, Pro-79, Pro-82, and Pro-88 each carry 4-hydroxyproline. Residues 112 to 130 are a coiled coil; it reads RKALQTEMARIKKWVTFSL. The region spanning 134–245 is the C-type lectin domain; that stretch reads VGKKLFLSNG…CSSSHLAICE (112 aa). 2 disulfide bridges follow: Cys-155–Cys-244 and Cys-222–Cys-236.

As to quaternary structure, oligomeric complex of 3 or more homotrimers. Interacts with MASP1 and MASP2. Interacts with MEP1A and MEP1B and may inhibit their catalytic activity. Post-translationally, hydroxylation on proline residues within the sequence motif, GXPG, is most likely to be 4-hydroxy as this fits the requirement for 4-hydroxylation in vertebrates.

The protein resides in the secreted. Its function is as follows. Calcium-dependent lectin involved in innate immune defense. Binds mannose, fucose and N-acetylglucosamine on different microorganisms and activates the lectin complement pathway. Binds to late apoptotic cells, as well as to apoptotic blebs and to necrotic cells, but not to early apoptotic cells, facilitating their uptake by macrophages. In Saguinus oedipus (Cotton-top tamarin), this protein is Mannose-binding protein C (MBL2).